We begin with the raw amino-acid sequence, 439 residues long: Serine/threonine-protein kinase 2 (439 aa).

Residues 87-439 (NDDFYHISTG…IFSDWINGRN (353 aa)) enclose the Protein kinase domain. ATP contacts are provided by residues 93–101 (ISTGGYGIV) and K117. The active-site Proton acceptor is the D307.

Belongs to the protein kinase superfamily. Ser/Thr protein kinase family. Poxviruses subfamily. In terms of processing, phosphorylated in vivo. Autophosphorylated in vitro.

It is found in the host endoplasmic reticulum. The protein resides in the host endoplasmic reticulum-Golgi intermediate compartment. It catalyses the reaction L-seryl-[protein] + ATP = O-phospho-L-seryl-[protein] + ADP + H(+). The catalysed reaction is L-threonyl-[protein] + ATP = O-phospho-L-threonyl-[protein] + ADP + H(+). Essential serine-protein kinase involved in the early stage of virion morphogenesis. The protein is Serine/threonine-protein kinase 2 (OPG054) of Homo sapiens (Human).